Here is a 474-residue protein sequence, read N- to C-terminus: Glutamine synthetase (474 aa).

A GS beta-grasp domain is found at Glu-15–Thr-99. One can recognise a GS catalytic domain in the interval Pro-107–Ile-474. Glu-132 and Glu-134 together coordinate Mg(2+). Position 210 (Glu-210) interacts with ATP. Glu-215 and Glu-223 together coordinate Mg(2+). Residues Asn-267–Gly-268 and Gly-268 contribute to the L-glutamate site. His-272 contacts Mg(2+). ATP contacts are provided by residues His-274–Ser-276 and Ser-276. L-glutamate is bound by residues Arg-325, Glu-331, and Arg-343. Positions 343, 348, and 357 each coordinate ATP. Glu-362 provides a ligand contact to Mg(2+). Arg-364 contacts L-glutamate. An O-AMP-tyrosine modification is found at Tyr-402.

The protein belongs to the glutamine synthetase family. As to quaternary structure, oligomer of 12 subunits arranged in the form of two hexagons. It depends on Mg(2+) as a cofactor.

Its subcellular location is the cytoplasm. The enzyme catalyses L-glutamate + NH4(+) + ATP = L-glutamine + ADP + phosphate + H(+). With respect to regulation, the activity of this enzyme could be controlled by adenylation under conditions of abundant glutamine. Its function is as follows. Catalyzes the ATP-dependent biosynthesis of glutamine from glutamate and ammonia. The polypeptide is Glutamine synthetase (Frankia alni).